We begin with the raw amino-acid sequence, 449 residues long: Probable secreted beta-glucosidase ARB_04747 (449 aa).

An N-terminal signal peptide occupies residues methionine 1–alanine 21. N-linked (GlcNAc...) asparagine glycosylation occurs at asparagine 57. A disordered region spans residues serine 96–cysteine 185. Residues proline 98–lysine 125 are compositionally biased toward pro residues. Residues glutamate 131–glycine 150 are compositionally biased toward basic and acidic residues.

Belongs to the SUN family.

The protein localises to the secreted. The protein resides in the cell wall. Functionally, cell surface beta-glucosidase involved in cytokinesis, cell wall biogenesis, adhesion to host tissue; thus playing an important role in the host-pathogen interaction. Has hydrolytic activity on linear (1-&gt;3)-beta-D-glucans such as laminaribiose and other laminarioligosaccharides. This Arthroderma benhamiae (strain ATCC MYA-4681 / CBS 112371) (Trichophyton mentagrophytes) protein is Probable secreted beta-glucosidase ARB_04747.